The following is a 502-amino-acid chain: Nondiscriminating glutamyl-tRNA synthetase EARS2, mitochondrial (502 aa).

The N-terminal 20 residues, 1-20 (MAGMLREVCGAAASGLRVRF), are a transit peptide targeting the mitochondrion. An L-glutamate-binding site is contributed by 19–21 (RFG). The short motif at 24–32 (PTGFLHLGG) is the 'HIGH' region element. H29 provides a ligand contact to ATP. L-glutamate is bound by residues E55, 207-211 (YHLAN), and R225. ATP-binding positions include E228 and 263–267 (KLSKR). Positions 263-267 (KLSKR) match the 'KMSKS' region motif.

Belongs to the class-I aminoacyl-tRNA synthetase family. Glutamate--tRNA ligase type 1 subfamily.

The protein resides in the mitochondrion matrix. The catalysed reaction is tRNA(Glx) + L-glutamate + ATP = L-glutamyl-tRNA(Glx) + AMP + diphosphate. The enzyme catalyses tRNA(Glu) + L-glutamate + ATP = L-glutamyl-tRNA(Glu) + AMP + diphosphate. It carries out the reaction tRNA(Gln) + L-glutamate + ATP = L-glutamyl-tRNA(Gln) + AMP + diphosphate. In terms of biological role, non-discriminating glutamyl-tRNA synthetase that catalyzes aminoacylation of both mitochondrial tRNA(Glu) and tRNA(Gln) and participates in RNA aminoacylation for mitochondrial protein translation. Attachs glutamate to tRNA(Glu) or tRNA(Gln) in a two-step reaction: glutamate is first activated by ATP to form Glu-AMP and then transferred to the acceptor end of tRNA(Glu) or tRNA(Gln). The chain is Nondiscriminating glutamyl-tRNA synthetase EARS2, mitochondrial from Gallus gallus (Chicken).